The chain runs to 1085 residues: Extracellular calcium-sensing receptor (1085 aa).

Positions 1–19 are cleaved as a signal peptide; the sequence is MALYSCCWILLAFSTWCTS. Residues 20–611 lie on the Extracellular side of the membrane; it reads AYGPDQRAQK…KEIEFLSWTE (592 aa). Positions 23-189 are ligand-binding 1 (LB1); the sequence is PDQRAQKKGD…QFKSFLRTIP (167 aa). A disulfide bridge links Cys61 with Cys102. Phosphate is bound at residue 67 to 71; that stretch reads RGFRW. Ca(2+) is bound by residues Ile82, Ser85, Leu88, and Leu89. Asn91 is a glycosylation site (N-linked (GlcNAc...) asparagine). A Ca(2+)-binding site is contributed by Thr101. A glycan (N-linked (GlcNAc...) asparagine) is linked at Asn131. Position 146 (Thr146) interacts with Ca(2+). Residues Ser148, Ala169, and Ser171 each coordinate L-tryptophan. Ca(2+)-binding residues include Ser171, Pro189, Asp191, Glu232, and Asp235. Residues 190–325 are ligand-binding 2 (LB2); it reads NDEHQATAMA…GGTIGFGLKA (136 aa). Disulfide bonds link Cys237-Cys562, Cys359-Cys396, Cys438-Cys450, Cys543-Cys563, Cys547-Cys566, Cys569-Cys583, and Cys586-Cys599. Residues Asp239 and Ser241 each coordinate spermine. N-linked (GlcNAc...) asparagine glycans are attached at residues Asn262 and Asn288. Glu298 serves as a coordination point for Ca(2+). Glu298 contributes to the L-tryptophan binding site. N-linked (GlcNAc...) asparagine glycosylation occurs at Asn401. Residue 416–418 coordinates phosphate; sequence RIS. Residues Asn447, Asn469, and Asn489 are each glycosylated (N-linked (GlcNAc...) asparagine). Tyr490 is a binding site for Ca(2+). The N-linked (GlcNAc...) asparagine glycan is linked to Asn542. The segment at 543–613 is cysteine-rich (CR); that stretch reads CSRDCLAGTR…IEFLSWTEPF (71 aa). A Ca(2+)-binding site is contributed by Gly558. N-linked (GlcNAc...) asparagine glycosylation occurs at Asn595. Residues 612-637 form a helical membrane-spanning segment; it reads PFGIALTLFAVLGIFLTAFVLGVFIK. Residues 638 to 649 lie on the Cytoplasmic side of the membrane; the sequence is FRNTPIVKATNR. The segment at 638–649 is intracellular loop 1 (ICL1); it reads FRNTPIVKATNR. The helical transmembrane segment at 650–669 threads the bilayer; the sequence is ELSYLLLFSLLCCFSSSLFF. Topologically, residues 670 to 675 are extracellular; that stretch reads IGEPQD. The chain crosses the membrane as a helical span at residues 676–699; that stretch reads WTCRLRQPAFGISFVLCISCILVK. Residues 700 to 723 are Cytoplasmic-facing; the sequence is TNRVLLVFEAKIPTSFHRKWWGLN. The intracellular loop 2 (ICL2) stretch occupies residues 700 to 723; sequence TNRVLLVFEAKIPTSFHRKWWGLN. The helical transmembrane segment at 724–746 threads the bilayer; it reads LQFLLVFLCTFMQIVICAIWLNT. Topologically, residues 747-770 are extracellular; sequence APPSSYRNHELEDEIIFITCHEGS. A helical transmembrane segment spans residues 771-790; that stretch reads LMALGFLIGYTCLLAAICFF. At 791-806 the chain is on the cytoplasmic side; that stretch reads FAFKSRKLPENFNEAK. An intracellular loop 3 (ICL3) region spans residues 791 to 806; that stretch reads FAFKSRKLPENFNEAK. The chain crosses the membrane as a helical span at residues 807–829; that stretch reads FITFSMLIFFIVWISFIPAYAST. Topologically, residues 830 to 833 are extracellular; that stretch reads YGKF. Residues 834–855 traverse the membrane as a helical segment; the sequence is VSAVEVIAILAASFGLLACIFF. The Cytoplasmic segment spans residues 856-1085; it reads NKVYIILFKP…STVTENMLRS (230 aa). The C-terminus stretch occupies residues 856 to 1085; it reads NKVYIILFKP…STVTENMLRS (230 aa). Positions 881–901 are interaction with RNF19A; that stretch reads AFKVAARATLRRSNVSRQRSS. Thr889 carries the phosphothreonine modification. The arginine-rich retention motif stretch occupies residues 891–899; that stretch reads RRSNVSRQR. Residues Ser893, Ser900, and Ser921 each carry the phosphoserine modification. The segment covering 893-938 has biased composition (low complexity); the sequence is SNVSRQRSSSLGGSTGSTPSSSISSKSNSEDPFPQQQPKRQKQPQP. Disordered regions lie at residues 893–969 and 1034–1058; these read SNVS…PPRC and SQET…EEMS. Pro residues predominate over residues 950–960; that stretch reads QPRPPSTPQPQ. At Ser1068 the chain carries Phosphoserine.

It belongs to the G-protein coupled receptor 3 family. Homodimer; disulfide-linked. Interacts with VCP. Interacts with ARRB1. In terms of processing, phosphorylation at Thr-889 by PKC impairs coupling with G(q)/G(11) G-proteins, while it does not affect G(i)/G(o)-coupling. Phosphorylation at Ser-893 by PKC and Ser-900 by PKA promote plasma membrane localization. Ubiquitinated by RNF19A; which induces proteasomal degradation.

The protein localises to the cell membrane. Its activity is regulated as follows. In resting state, adopts an open conformation, anion-binding promoting the inactive configuration. Upon aromatic amino acid-binding, the groove in the extracellular venus flytrap module is closed, thereby inducing the formation of a novel homodimer interface between subunits. Calcium ions stabilize the active state by enhancing homodimer interactions between membrane-proximal domains to fully activate the receptor. Upon activation, the homodimer adopts an asymmetric configuration of the 7-transmembrane region that primes one protomer for G-protein coupling. G-protein binding expands the transmembrane dimer interface; the restriction imposed by the receptor dimer, in combination with intracellular loop 2 (ICL2), enables G-protein activation by facilitating conformational transition of G-protein alpha. Coupling to different classes of G-proteins results in distinct CASR-G-protein interfaces. Functionally, G-protein-coupled receptor that senses changes in the extracellular concentration of calcium ions and plays a key role in maintaining calcium homeostasis. Senses fluctuations in the circulating calcium concentration: activated by elevated circulating calcium, leading to decreased parathyroid hormone (PTH) secretion in parathyroid glands. In kidneys, acts as a key regulator of renal tubular calcium resorption. Ligand binding causes a conformation change that triggers signaling via guanine nucleotide-binding proteins (G-proteins) and modulates the activity of downstream effectors. CASR is coupled with different G(q)/G(11), G(i)/G(o)- or G(s)-classes of G-proteins depending on the context. In the parathyroid and kidney, CASR signals through G(q)/G(11) and G(i)/G(o) G-proteins: G(q)/G(11) coupling activates phospholipase C-beta, releasing diacylglycerol (DAG) and inositol 1,4,5-trisphosphate (IP3) second messengers, while G(i)/G(o) coupling mediates inhibition of adenylate cyclase activity. The G-protein-coupled receptor activity is activated by a co-agonist mechanism: aromatic amino acids, such as Trp or Phe, act concertedly with divalent cations, such as calcium or magnesium, to achieve full receptor activation. Acts as an activator of the NLRP3 inflammasome via G(i)/G(o)-mediated signaling: down-regulation of cyclic AMP (cAMP) relieving NLRP3 inhibition by cAMP. Acts as a regulator of proton-sensing receptor GPR68 in a seesaw manner: CASR-mediated signaling inhibits GPR68 signaling in response to extracellular calcium, while GPR68 inhibits CASR in presence of extracellular protons. This chain is Extracellular calcium-sensing receptor (CASR), found in Bos taurus (Bovine).